Reading from the N-terminus, the 1219-residue chain is Myosin-5 (1219 aa).

Basic residues predominate over residues 1 to 12 (MAILKRGARKKV). The disordered stretch occupies residues 1-20 (MAILKRGARKKVHQEPAKRS). In terms of domain architecture, Myosin motor spans 36 to 715 (VGVSDLTLLS…TLFALEHMRD (680 aa)). ATP is bound at residue 129 to 136 (GESGAGKT). Ser-357 is subject to Phosphoserine. Tyr-359 carries the post-translational modification Phosphotyrosine. The segment at 404–486 (SIGILDIYGF…PGIFAAMNDS (83 aa)) is actin-binding. 2 IQ domains span residues 719–739 (HNMAARIQRAWRRFLQRRIDA) and 740–765 (ATKIQRTIRERKEGNKYEKLRDYGTK). The region spanning 771–961 (KERRSMSLLG…TISVRRGNPP (191 aa)) is the TH1 domain. Position 777 is a phosphoserine (Ser-777). Polar residues predominate over residues 951-964 (STISVRRGNPPNSQ). Disordered regions lie at residues 951 to 1106 (STIS…SELP) and 1139 to 1167 (TAYMKPHSGNNNIPTPPQNRDVPKPVLNS). Residues 974 to 984 (SISSGYHASSS) are compositionally biased toward low complexity. At Ser-992 the chain carries Phosphoserine. Residues 1030 to 1041 (NPASTLTASQSN) are compositionally biased toward polar residues. Positions 1048–1063 (TAATRATPAATPAAAA) are enriched in low complexity. The span at 1072-1083 (IPPPPPPPPPSS) shows a compositional bias: pro residues. An SH3 domain is found at 1085–1147 (PKEPMFEAAY…PTAYMKPHSG (63 aa)). Ser-1205 bears the Phosphoserine mark.

It belongs to the TRAFAC class myosin-kinesin ATPase superfamily. Myosin family. Interacts (via myosin motor domain) with SHE4; this interaction is important for proper localization and may regulate the interaction of the motor domain with actin. Interacts (via SH3 domain) with VRP1; this interaction is required for localization to sites of polarized growth and may regulate the interaction of the tail domain with actin. Interacts (via SH3 domain) with PAN1; this interaction is important for late stages of endocytopsis. Interacts (via SH3 domain) with BBC1 and LAS17. Interacts (via C-terminal acidic tail) with ARC19 and ARC40; ARC19 and ARC40 are Arp2/3 complex subunits. Interacts with BZZ1, PKH1, PKH2, YPK1 and YPK2. Post-translationally, phosphorylation of the TEDS site (Ser-357) is required for the polarization of the actin cytoskeleton and for ligand-induced, but not for constitutive internalization of STE2. Phosphorylation probably activates the myosin-I ATPase activity. Ser-357 is phosphorylated by YPK2 in vitro.

The protein resides in the cytoplasm. It is found in the cytoskeleton. The protein localises to the actin patch. Its function is as follows. One of two redundant type-I myosins implicated in the organization of the actin cytoskeleton. Required for proper actin cytoskeleton polarization and for the internalization step in endocytosis. At the cell cortex, assembles in patch-like structures together with proteins from the actin-polymerizing machinery and promotes actin assembly. Functions redundantly with LAS17 as actin nucleation-promoting factor (NPF) for the Arp2/3 complex. Motor domain phosphorylation by PAK kinases CLA4 and STE20 promotes CDC42-regulated actin assembly. Functions together with the NPF PAN1 in late stages of endocytosis. Motor domain phosphorylation by PDK1 kinases PKH1 and PKH2, and by SGK kinases YPK1 and YPK2, promotes ligand-induced, but not constitutive endocytosis of the G protein-coupled receptor STE2. The protein is Myosin-5 (MYO5) of Saccharomyces cerevisiae (strain YJM789) (Baker's yeast).